The chain runs to 419 residues: Tyrosine--tRNA ligase (419 aa).

L-tyrosine is bound at residue Y34. Positions 39–48 (PTADSLHIGN) match the 'HIGH' region motif. Y169 and Q173 together coordinate L-tyrosine. The 'KMSKS' region signature appears at 230–234 (KFGKT). K233 provides a ligand contact to ATP. Residues 352–419 (VPLVELLVSA…KKKYYLIRYA (68 aa)) enclose the S4 RNA-binding domain.

This sequence belongs to the class-I aminoacyl-tRNA synthetase family. TyrS type 1 subfamily. In terms of assembly, homodimer.

Its subcellular location is the cytoplasm. The catalysed reaction is tRNA(Tyr) + L-tyrosine + ATP = L-tyrosyl-tRNA(Tyr) + AMP + diphosphate + H(+). In terms of biological role, catalyzes the attachment of tyrosine to tRNA(Tyr) in a two-step reaction: tyrosine is first activated by ATP to form Tyr-AMP and then transferred to the acceptor end of tRNA(Tyr). The polypeptide is Tyrosine--tRNA ligase (Geobacillus kaustophilus (strain HTA426)).